A 365-amino-acid polypeptide reads, in one-letter code: Casein kinase I homolog hhp1 (365 aa).

The region spanning 11-279 (YRIGRKIGSG…YLRKLFRDLF (269 aa)) is the Protein kinase domain. ATP contacts are provided by residues 17–25 (IGSGSFGDI) and Lys40. Asp130 acts as the Proton acceptor in catalysis. The span at 301-311 (DQQHQQQLQQQ) shows a compositional bias: low complexity. The disordered stretch occupies residues 301–365 (DQQHQQQLQQ…TGAQYINRPN (65 aa)). The segment covering 343 to 365 (INTTVPVINDPSATGAQYINRPN) has biased composition (polar residues).

It belongs to the protein kinase superfamily. CK1 Ser/Thr protein kinase family. Casein kinase I subfamily.

It is found in the nucleus. The enzyme catalyses L-seryl-[protein] + ATP = O-phospho-L-seryl-[protein] + ADP + H(+). It catalyses the reaction L-threonyl-[protein] + ATP = O-phospho-L-threonyl-[protein] + ADP + H(+). In terms of biological role, involved in DNA repair. Has a probable role in repairing alkylated DNA and may regulate the activity of protein(s) involved in double strand break repair caused by gamma rays. The sequence is that of Casein kinase I homolog hhp1 (hhp1) from Schizosaccharomyces pombe (strain 972 / ATCC 24843) (Fission yeast).